Reading from the N-terminus, the 111-residue chain is Cytochrome c (111 aa).

Position 1 is an N-acetylalanine (A1). The heme c site is built by C22, C25, and H26. K80 carries the N6,N6,N6-trimethyllysine modification. M88 is a heme c binding site. At K94 the chain carries N6,N6,N6-trimethyllysine.

This sequence belongs to the cytochrome c family. Post-translationally, binds 1 heme c group covalently per subunit.

Its subcellular location is the mitochondrion intermembrane space. Its function is as follows. Electron carrier protein. The oxidized form of the cytochrome c heme group can accept an electron from the heme group of the cytochrome c1 subunit of cytochrome reductase. Cytochrome c then transfers this electron to the cytochrome oxidase complex, the final protein carrier in the mitochondrial electron-transport chain. The polypeptide is Cytochrome c (Brassica napus (Rape)).